Reading from the N-terminus, the 344-residue chain is MSNAITMGIFWHLIGAASAACFYAPFKQVKQWSWETMWSVGGIVSWLILPWTISALLLPDFWAYYGQFNLSTLLPVFLFGAMWGIGNINYGLTMRYLGMSMGIGIAIGITLIVGTLMTPIINGNFDVLIHTEGGRMTLLGVFVALIGVGIVTRAGQLKERKMGIKAEEFNLKKGLLLAVICGIFSAGMSFAMNAAKPMHEAAAALGVDPLYVALPSYVVIMGGGALVNLGFCFIRLAKVQNLSIKADFSLARPLIISNILLSALGGLMWYLQFFFYAWGHARIPAQYDYMSWMLHMSFYVLCGGLVGLVLKEWKNAGRRPVAVLSLGCVVIIIAANIVGLGMAS.

10 helical membrane passes run 4–24 (AITM…CFYA), 38–58 (WSVG…ALLL), 68–88 (FNLS…IGNI), 101–121 (MGIG…TPII), 137–157 (TLLG…AGQL), 175–195 (LLLA…MNAA), 214–234 (LPSY…FCFI), 259–279 (ILLS…YAWG), 290–310 (MSWM…GLVL), and 321–341 (VAVL…VGLG).

The protein belongs to the L-rhamnose transporter (TC 2.A.7.6) family.

It localises to the cell inner membrane. It carries out the reaction L-rhamnopyranose(in) + H(+)(in) = L-rhamnopyranose(out) + H(+)(out). Its function is as follows. Uptake of L-rhamnose across the cytoplasmic membrane with the concomitant transport of protons into the cell (symport system). This chain is L-rhamnose-proton symporter, found in Salmonella paratyphi A (strain ATCC 9150 / SARB42).